A 160-amino-acid chain; its full sequence is Phosphopantetheine adenylyltransferase (160 aa).

Serine 10 contacts substrate. ATP contacts are provided by residues 10–11 (SF) and histidine 18. Substrate-binding residues include lysine 42, leucine 74, and arginine 88. ATP is bound by residues 89–91 (GLR), glutamate 99, and 124–130 (YSFLSSS).

The protein belongs to the bacterial CoaD family. In terms of assembly, homohexamer. The cofactor is Mg(2+).

It is found in the cytoplasm. The catalysed reaction is (R)-4'-phosphopantetheine + ATP + H(+) = 3'-dephospho-CoA + diphosphate. It functions in the pathway cofactor biosynthesis; coenzyme A biosynthesis; CoA from (R)-pantothenate: step 4/5. Functionally, reversibly transfers an adenylyl group from ATP to 4'-phosphopantetheine, yielding dephospho-CoA (dPCoA) and pyrophosphate. This is Phosphopantetheine adenylyltransferase from Bacillus pumilus (strain SAFR-032).